The sequence spans 282 residues: Bis(5'-nucleosyl)-tetraphosphatase, symmetrical (282 aa).

The protein belongs to the Ap4A hydrolase family.

The catalysed reaction is P(1),P(4)-bis(5'-adenosyl) tetraphosphate + H2O = 2 ADP + 2 H(+). Functionally, hydrolyzes diadenosine 5',5'''-P1,P4-tetraphosphate to yield ADP. The protein is Bis(5'-nucleosyl)-tetraphosphatase, symmetrical of Burkholderia pseudomallei (strain 668).